The following is a 394-amino-acid chain: Glycerol-1-phosphate dehydrogenase [NAD(P)+] (394 aa).

Residues aspartate 54, 116–120 (GTIHD), and 138–141 (TAPS) contribute to the NAD(+) site. Substrate is bound at residue aspartate 143. Serine 147 is an NAD(+) binding site. Aspartate 190 is a substrate binding site. Ni(2+) is bound by residues aspartate 190 and histidine 270. Position 274 (histidine 274) interacts with substrate. Histidine 290 provides a ligand contact to Ni(2+).

It belongs to the glycerol-1-phosphate dehydrogenase family. In terms of assembly, homodimer. Requires Ni(2+) as cofactor.

The protein localises to the cytoplasm. The enzyme catalyses sn-glycerol 1-phosphate + NAD(+) = dihydroxyacetone phosphate + NADH + H(+). It carries out the reaction sn-glycerol 1-phosphate + NADP(+) = dihydroxyacetone phosphate + NADPH + H(+). In terms of biological role, catalyzes the NAD(P)H-dependent reduction of dihydroxyacetonephosphate (DHAP or glycerone phosphate) to glycerol 1-phosphate (G1P). The G1P thus generated is probably used for the synthesis of phosphoglycerolipids in Gram-positive bacterial species. Prefers NADH over NADPH as coenzyme. Is also able to catalyze the reverse reaction, i.e. the NAD(+)-dependent oxidation of G1P but not of G3P. Does not possess glycerol dehydrogenase activity. The sequence is that of Glycerol-1-phosphate dehydrogenase [NAD(P)+] (egsA) from Bacillus subtilis (strain 168).